Here is a 1377-residue protein sequence, read N- to C-terminus: DNA-directed RNA polymerase subunit beta (1377 aa).

This sequence belongs to the RNA polymerase beta chain family. As to quaternary structure, the RNAP catalytic core consists of 2 alpha, 1 beta, 1 beta' and 1 omega subunit. When a sigma factor is associated with the core the holoenzyme is formed, which can initiate transcription.

The catalysed reaction is RNA(n) + a ribonucleoside 5'-triphosphate = RNA(n+1) + diphosphate. Functionally, DNA-dependent RNA polymerase catalyzes the transcription of DNA into RNA using the four ribonucleoside triphosphates as substrates. The polypeptide is DNA-directed RNA polymerase subunit beta (Orientia tsutsugamushi (strain Boryong) (Rickettsia tsutsugamushi)).